A 131-amino-acid polypeptide reads, in one-letter code: MKKIEKTLDEWRSMLDPEQYQVCRLKGTERPFSGKYNSERRDGIYHCICCGLALFDAQTKFDAGCGWPSFYAPIEDSAMIEIRDTSHGMIRTEVTCARCDAHLGHVFPDGPPPTGLRYCINSVCIDLRPRD.

The region spanning 8–130 (LDEWRSMLDP…NSVCIDLRPR (123 aa)) is the MsrB domain. Zn(2+) is bound by residues C47, C50, C96, and C99. The active-site Nucleophile is C119.

The protein belongs to the MsrB Met sulfoxide reductase family. Requires Zn(2+) as cofactor.

The enzyme catalyses L-methionyl-[protein] + [thioredoxin]-disulfide + H2O = L-methionyl-(R)-S-oxide-[protein] + [thioredoxin]-dithiol. The chain is Peptide methionine sulfoxide reductase MsrB from Pseudomonas putida (strain ATCC 700007 / DSM 6899 / JCM 31910 / BCRC 17059 / LMG 24140 / F1).